We begin with the raw amino-acid sequence, 94 residues long: Pyrimidine/purine nucleoside phosphorylase (94 aa).

It belongs to the nucleoside phosphorylase PpnP family.

The catalysed reaction is a purine D-ribonucleoside + phosphate = a purine nucleobase + alpha-D-ribose 1-phosphate. It carries out the reaction adenosine + phosphate = alpha-D-ribose 1-phosphate + adenine. The enzyme catalyses cytidine + phosphate = cytosine + alpha-D-ribose 1-phosphate. It catalyses the reaction guanosine + phosphate = alpha-D-ribose 1-phosphate + guanine. The catalysed reaction is inosine + phosphate = alpha-D-ribose 1-phosphate + hypoxanthine. It carries out the reaction thymidine + phosphate = 2-deoxy-alpha-D-ribose 1-phosphate + thymine. The enzyme catalyses uridine + phosphate = alpha-D-ribose 1-phosphate + uracil. It catalyses the reaction xanthosine + phosphate = alpha-D-ribose 1-phosphate + xanthine. Functionally, catalyzes the phosphorolysis of diverse nucleosides, yielding D-ribose 1-phosphate and the respective free bases. Can use uridine, adenosine, guanosine, cytidine, thymidine, inosine and xanthosine as substrates. Also catalyzes the reverse reactions. The chain is Pyrimidine/purine nucleoside phosphorylase from Pseudomonas fluorescens (strain ATCC BAA-477 / NRRL B-23932 / Pf-5).